The primary structure comprises 258 residues: Type III pantothenate kinase (258 aa).

Position 6-13 (6-13) interacts with ATP; it reads DVGNTNTV. Residues Y100 and 107–110 each bind substrate; that span reads GADR. The Proton acceptor role is filled by D109. Residue D129 coordinates K(+). ATP is bound at residue T132. Residue T184 coordinates substrate.

It belongs to the type III pantothenate kinase family. In terms of assembly, homodimer. The cofactor is NH4(+). K(+) is required as a cofactor.

It localises to the cytoplasm. It catalyses the reaction (R)-pantothenate + ATP = (R)-4'-phosphopantothenate + ADP + H(+). It functions in the pathway cofactor biosynthesis; coenzyme A biosynthesis; CoA from (R)-pantothenate: step 1/5. In terms of biological role, catalyzes the phosphorylation of pantothenate (Pan), the first step in CoA biosynthesis. In Geobacillus sp. (strain WCH70), this protein is Type III pantothenate kinase.